We begin with the raw amino-acid sequence, 497 residues long: Ectonucleoside triphosphate diphosphohydrolase 8 (497 aa).

At 1 to 8 the chain is on the cytoplasmic side; that stretch reads MGLSWKER. A helical membrane pass occupies residues 9-29; the sequence is VFMALLGVAAASGLTMLVLIL. The Extracellular segment spans residues 30-473; sequence VKAINVLLPA…AQSYSIWTAG (444 aa). Cysteine 78 and cysteine 102 are disulfide-bonded. Glutamate 168 acts as the Proton acceptor in catalysis. Cysteines 245 and 294 form a disulfide. A glycan (N-linked (GlcNAc...) asparagine) is linked at asparagine 306. Cysteine 331 and cysteine 337 are joined by a disulfide. A glycan (N-linked (GlcNAc...) asparagine) is linked at asparagine 365. A disulfide bond links cysteine 383 and cysteine 405. The chain crosses the membrane as a helical span at residues 474 to 494; it reads VVFAVLTLVAILGAAAIQIFW. The Cytoplasmic segment spans residues 495–497; sequence TQD.

It belongs to the GDA1/CD39 NTPase family. Requires Ca(2+) as cofactor. It depends on Mg(2+) as a cofactor. N-glycosylated. As to expression, expressed in liver, jejunum and kidney.

It localises to the cell membrane. The enzyme catalyses a ribonucleoside 5'-triphosphate + 2 H2O = a ribonucleoside 5'-phosphate + 2 phosphate + 2 H(+). Functionally, canalicular ectonucleoside NTPDase responsible for the main hepatic NTPDase activity. Ectonucleoside NTPDases catalyze the hydrolysis of gamma- and beta-phosphate residues of nucleotides, playing a central role in concentration of extracellular nucleotides. Has activity toward ATP, ADP, UTP and UDP, but not toward AMP. The sequence is that of Ectonucleoside triphosphate diphosphohydrolase 8 (Entpd8) from Mus musculus (Mouse).